Consider the following 122-residue polypeptide: Large ribosomal subunit protein uL14 (122 aa).

This sequence belongs to the universal ribosomal protein uL14 family. As to quaternary structure, part of the 50S ribosomal subunit. Forms a cluster with proteins L3 and L19. In the 70S ribosome, L14 and L19 interact and together make contacts with the 16S rRNA in bridges B5 and B8.

In terms of biological role, binds to 23S rRNA. Forms part of two intersubunit bridges in the 70S ribosome. This chain is Large ribosomal subunit protein uL14, found in Synechococcus sp. (strain JA-2-3B'a(2-13)) (Cyanobacteria bacterium Yellowstone B-Prime).